Reading from the N-terminus, the 273-residue chain is DNA repair protein RecO (273 aa).

The disordered stretch occupies residues 249 to 273 (GRSLTEEPELKAEQTEAEKESQRPR). Basic and acidic residues predominate over residues 252–273 (LTEEPELKAEQTEAEKESQRPR).

The protein belongs to the RecO family.

Its function is as follows. Involved in DNA repair and RecF pathway recombination. The protein is DNA repair protein RecO of Heliobacterium modesticaldum (strain ATCC 51547 / Ice1).